Consider the following 602-residue polypeptide: Serine/threonine-protein phosphatase 2A 56 kDa regulatory subunit delta isoform (602 aa).

A compositionally biased stretch (basic and acidic residues) spans Met1 to Lys13. Residues Met1–Lys96 are disordered. A run of 5 repeats spans residues Gln37–Pro38, Gln39–Pro40, Gln41–Pro42, Gln43–Pro44, and Gln45–Pro46. The segment at Gln37–Pro52 is 8 X 2 AA approximate tandem repeats of Q-P. A compositionally biased stretch (low complexity) spans Pro46 to Ser55. The 6; approximate repeat unit spans residues Gln47 to Ala48. The stretch at Gln49–Ser50 is one 7; approximate repeat. Repeat 8 spans residues Gln51–Pro52. A Phosphothreonine modification is found at Thr63. Phosphoserine is present on residues Ser88, Ser89, and Ser90. Positions Arg523–Pro530 match the SH3-binding; class I motif. Residues Lys548–Glu565 carry the Nuclear localization signal motif. Residues Ser573 and Ser598 each carry the phosphoserine modification.

The protein belongs to the phosphatase 2A regulatory subunit B56 family. As to quaternary structure, PP2A consists of a common heterodimeric core enzyme, composed of a 36 kDa catalytic subunit (subunit C) and a 65 kDa constant regulatory subunit (PR65 or subunit A), that associates with a variety of regulatory subunits. Proteins that associate with the core dimer include three families of regulatory subunits B (the R2/B/PR55/B55, R3/B''/PR72/PR130/PR59 and R5/B'/B56 families), the 48 kDa variable regulatory subunit, viral proteins, and cell signaling molecules. Interacts with the PP2A A subunit PPP2R1A. Interacts with SGO1. Interacts with ADCY8. As to expression, isoform Delta-2 is widely expressed. Isoform Delta-1 is highly expressed in brain.

The protein resides in the cytoplasm. It localises to the nucleus. The B regulatory subunit might modulate substrate selectivity and catalytic activity, and might also direct the localization of the catalytic enzyme to a particular subcellular compartment. This chain is Serine/threonine-protein phosphatase 2A 56 kDa regulatory subunit delta isoform (PPP2R5D), found in Homo sapiens (Human).